The following is a 178-amino-acid chain: Mediator of RNA polymerase II transcription subunit 28 (178 aa).

A disordered region spans residues 1-44 (MAAPLGGMFSGQPPGPPQAPPGLPGQASLLQAAPGAPRPSSSTL). Residues 13 to 23 (PPGPPQAPPGL) show a composition bias toward pro residues. Residues 109–145 (QVIKEDVSELRNELQRKDALVQKHLTKLRHWQQVLED) adopt a coiled-coil conformation.

Belongs to the Mediator complex subunit 28 family. In terms of assembly, component of the Mediator complex, which is composed of MED1, MED4, MED6, MED7, MED8, MED9, MED10, MED11, MED12, MED13, MED13L, MED14, MED15, MED16, MED17, MED18, MED19, MED20, MED21, MED22, MED23, MED24, MED25, MED26, MED27, MED29, MED30, MED31, CCNC, CDK8 and CDC2L6/CDK11. The MED12, MED13, CCNC and CDK8 subunits form a distinct module termed the CDK8 module. Mediator containing the CDK8 module is less active than Mediator lacking this module in supporting transcriptional activation. Individual preparations of the Mediator complex lacking one or more distinct subunits have been variously termed ARC, CRSP, DRIP, PC2, SMCC and TRAP. Forms a ternary complex with NF2/merlin and GRB2. Binds to actin. Widely expressed. Highly expressed in vascular tissues such as placenta, testis and liver.

The protein localises to the nucleus. The protein resides in the cytoplasm. Its subcellular location is the membrane. In terms of biological role, component of the Mediator complex, a coactivator involved in the regulated transcription of nearly all RNA polymerase II-dependent genes. Mediator functions as a bridge to convey information from gene-specific regulatory proteins to the basal RNA polymerase II transcription machinery. Mediator is recruited to promoters by direct interactions with regulatory proteins and serves as a scaffold for the assembly of a functional preinitiation complex with RNA polymerase II and the general transcription factors. May be part of a complex containing NF2/merlin that participates in cellular signaling to the actin cytoskeleton downstream of tyrosine kinase signaling pathways. The protein is Mediator of RNA polymerase II transcription subunit 28 (MED28) of Homo sapiens (Human).